A 208-amino-acid polypeptide reads, in one-letter code: uncharacterized protein (208 aa).

Disordered stretches follow at residues 74–117 (FEYK…RDSP) and 181–208 (ESKLGSSEDSGTDRFSSNTSGSSGRKFK). Positions 184-208 (LGSSEDSGTDRFSSNTSGSSGRKFK) are enriched in polar residues.

This is an uncharacterized protein from Mus musculus (Mouse).